A 131-amino-acid polypeptide reads, in one-letter code: Single-stranded DNA-binding protein 2 (131 aa).

The region spanning 1-103 (MYNKVIMIGR…VLASSFQLLE (103 aa)) is the SSB domain. The short motif at 126 to 131 (EEELPF) is the Important for interaction with partner proteins element.

Homotetramer.

Its function is as follows. Plays an important role in DNA replication, recombination and repair. Binds to ssDNA and to an array of partner proteins to recruit them to their sites of action during DNA metabolism. This chain is Single-stranded DNA-binding protein 2 (ssb2), found in Streptococcus agalactiae serotype V (strain ATCC BAA-611 / 2603 V/R).